The chain runs to 248 residues: Tropomyosin alpha-4 chain (248 aa).

N-acetylalanine is present on Ala2. Residues 2–248 (AGLNSLEAVK…DQTLNELNCI (247 aa)) adopt a coiled-coil conformation. Ser6 is subject to Phosphoserine. Residues 15-47 (QALQQQADEAEDRAQGLQRELDGERERREKAEG) form a disordered region. Basic and acidic residues predominate over residues 33-47 (RELDGERERREKAEG). N6-acetyllysine occurs at positions 177 and 215. Residue Thr216 is modified to Phosphothreonine.

This sequence belongs to the tropomyosin family. In terms of assembly, homodimer. Heterodimer of an alpha (TPM1, TPM3 or TPM4) and a beta (TPM2) chain. Detected in cardiac tissue and platelets, the form found in cardiac tissue is a higher molecular weight than the form found in platelets. Expressed at higher levels in the platelets of hypertensive patients with cardiac hypertrophy than in the platelets of hypertensive patients without cardiac hypertrophy (at protein level).

Its subcellular location is the cytoplasm. The protein resides in the cytoskeleton. Its function is as follows. Binds to actin filaments in muscle and non-muscle cells. Plays a central role, in association with the troponin complex, in the calcium dependent regulation of vertebrate striated muscle contraction. Smooth muscle contraction is regulated by interaction with caldesmon. In non-muscle cells is implicated in stabilizing cytoskeleton actin filaments. Binds calcium. Plays a role in platelet biogenesis. The sequence is that of Tropomyosin alpha-4 chain (TPM4) from Homo sapiens (Human).